Consider the following 238-residue polypeptide: MRNQHSLEEIAEIHSLLEDIKGEYEKGIRAVIKKNNPELFGNPHTIPKLQKIQINRGLGLAAQNTNILKKSINEFTAITGQKPIITRAKKAIAGFKIRENMELGLTVTLRGSKMYSFLTKLIFFTFAQIRDFRGLSVRSFDKAGNYTLGLKEQLIFPEIDYDDVDQTQGFSITLVFSSTAPKSRSKTMDRVLNGMVLFKFLRFPLNDSGYYDKYSSFSEVSQAWDRKKHLRRKRWSQE.

Belongs to the universal ribosomal protein uL5 family. Part of the 50S ribosomal subunit; contacts the 5S rRNA.

It is found in the plastid. Its subcellular location is the chloroplast. Binds 5S rRNA, forms part of the central protuberance of the 50S subunit. The protein is Large ribosomal subunit protein uL5c (rpl5) of Trieres chinensis (Marine centric diatom).